The following is a 382-amino-acid chain: D-galactonate dehydratase 1 (382 aa).

Residue Asp-183 coordinates Mg(2+). The active-site Proton donor is the His-185. Positions 209 and 235 each coordinate Mg(2+). The active-site Proton acceptor is His-285.

The protein belongs to the mandelate racemase/muconate lactonizing enzyme family. GalD subfamily. Requires Mg(2+) as cofactor.

The catalysed reaction is D-galactonate = 2-dehydro-3-deoxy-D-galactonate + H2O. It participates in carbohydrate acid metabolism; D-galactonate degradation; D-glyceraldehyde 3-phosphate and pyruvate from D-galactonate: step 1/3. Catalyzes the dehydration of D-galactonate to 2-keto-3-deoxy-D-galactonate. The chain is D-galactonate dehydratase 1 from Escherichia coli (strain SMS-3-5 / SECEC).